We begin with the raw amino-acid sequence, 194 residues long: ATP-dependent Clp protease proteolytic subunit (194 aa).

Residue Ser98 is the Nucleophile of the active site. His123 is a catalytic residue.

The protein belongs to the peptidase S14 family. In terms of assembly, fourteen ClpP subunits assemble into 2 heptameric rings which stack back to back to give a disk-like structure with a central cavity, resembling the structure of eukaryotic proteasomes.

The protein localises to the cytoplasm. The catalysed reaction is Hydrolysis of proteins to small peptides in the presence of ATP and magnesium. alpha-casein is the usual test substrate. In the absence of ATP, only oligopeptides shorter than five residues are hydrolyzed (such as succinyl-Leu-Tyr-|-NHMec, and Leu-Tyr-Leu-|-Tyr-Trp, in which cleavage of the -Tyr-|-Leu- and -Tyr-|-Trp bonds also occurs).. Cleaves peptides in various proteins in a process that requires ATP hydrolysis. Has a chymotrypsin-like activity. Plays a major role in the degradation of misfolded proteins. The sequence is that of ATP-dependent Clp protease proteolytic subunit from Sodalis glossinidius (strain morsitans).